Consider the following 271-residue polypeptide: 3-methyl-2-oxobutanoate hydroxymethyltransferase (271 aa).

Residues Asp-51 and Asp-90 each contribute to the Mg(2+) site. 3-methyl-2-oxobutanoate-binding positions include 51–52, Asp-90, and Lys-119; that span reads DS. Mg(2+) is bound at residue Glu-121. Catalysis depends on Glu-188, which acts as the Proton acceptor.

This sequence belongs to the PanB family. As to quaternary structure, homodecamer; pentamer of dimers. Requires Mg(2+) as cofactor.

It localises to the cytoplasm. It carries out the reaction 3-methyl-2-oxobutanoate + (6R)-5,10-methylene-5,6,7,8-tetrahydrofolate + H2O = 2-dehydropantoate + (6S)-5,6,7,8-tetrahydrofolate. It participates in cofactor biosynthesis; (R)-pantothenate biosynthesis; (R)-pantoate from 3-methyl-2-oxobutanoate: step 1/2. Its function is as follows. Catalyzes the reversible reaction in which hydroxymethyl group from 5,10-methylenetetrahydrofolate is transferred onto alpha-ketoisovalerate to form ketopantoate. In Aromatoleum aromaticum (strain DSM 19018 / LMG 30748 / EbN1) (Azoarcus sp. (strain EbN1)), this protein is 3-methyl-2-oxobutanoate hydroxymethyltransferase.